The sequence spans 1008 residues: Collagen alpha-2(I) chain (1008 aa).

Residues 1–999 (GGFDFSFLPQ…IRGSGGGYDF (999 aa)) are disordered. Residues proline 9, proline 12, proline 45, and proline 51 each carry the 4-hydroxyproline modification. Residues 38–81 (LMGPRGPPGASGAPGPQGFPAGEPGEPGQTGPAGARGPAGPPGK) are compositionally biased toward low complexity. The span at 82 to 94 (ADGHPGKPGRPGE) shows a compositional bias: basic and acidic residues. Lysine 116 carries the post-translational modification 5-hydroxylysine; alternate. O-linked (Gal...) hydroxylysine; alternate glycosylation occurs at lysine 116. Low complexity-rich tracts occupy residues 164–193 (VGAPGPAGARGSDGSVGPVGPAGPIGSAGP), 239–260 (PGANGLTGAKGAAGLPGVAGAP), and 301–314 (EPGSAGPQGPPGSS). Residues 336 to 345 (GLRGGPGSRG) are compositionally biased toward gly residues. A compositionally biased stretch (low complexity) spans 358 to 374 (PAGARGASGPAGVRGPS). Proline 380 and proline 383 each carry 4-hydroxyproline. Low complexity predominate over residues 409–428 (LPGIDGRPGPIGPAGARGEA). Residues 455–466 (GNRGQGGKGEQG) show a composition bias toward gly residues. 2 stretches are compositionally biased toward low complexity: residues 513–530 (PGESGAVGPSGAIGSRGP) and 542–552 (EPGVVGAPGTA). A compositionally biased stretch (gly residues) spans 553 to 562 (GPAGSGGLPG). Low complexity-rich tracts occupy residues 582-629 (RGEV…PRGS) and 636-656 (VGPAGPNGFAGPAGAAGQPGA). Residues 657–666 (KGERGTKGPK) are compositionally biased toward basic and acidic residues. A compositionally biased stretch (low complexity) spans 674-684 (PTGPVGSAGPA). Positions 694–703 (GSRGDGGPPG) are enriched in gly residues. The segment covering 704–714 (ATGFPGAAGRT) has biased composition (low complexity). Residues 751 to 760 (GETGAGGPPG) are compositionally biased toward gly residues. Composition is skewed to low complexity over residues 768–795 (SGEPGTAGPPGTAGPQGLLGAPGILGLP), 803–813 (LPGVAGAVGEP), 826–842 (PPGAVGSPGVNGAPGNP), 862–884 (YAGNAGPVGAAGAPGPHGTVGPA), and 892–907 (EPGPVGSVGPVGALGP). Residues 917–928 (RGDKGEPGDKGP) are compositionally biased toward basic and acidic residues. The segment covering 989–998 (GIRGSGGGYD) has biased composition (gly residues).

Belongs to the fibrillar collagen family. Trimers of one alpha 2(I) and two alpha 1(I) chains. Interacts (via C-terminus) with TMEM131 (via PapD-L domain); the interaction is direct and is involved in assembly and TRAPPIII ER-to-Golgi transport complex-dependent secretion of collagen. Prolines at the third position of the tripeptide repeating unit (G-X-Y) are hydroxylated in some or all of the chains. In terms of tissue distribution, expressed in bones.

It localises to the secreted. It is found in the extracellular space. The protein localises to the extracellular matrix. In terms of biological role, type I collagen is a member of group I collagen (fibrillar forming collagen). The sequence is that of Collagen alpha-2(I) chain from Nothrotheriops shastensis (Shasta ground sloth).